Consider the following 124-residue polypeptide: Large ribosomal subunit protein eL31 (124 aa).

Residue Tyr-102 is modified to Phosphotyrosine.

Belongs to the eukaryotic ribosomal protein eL31 family.

The chain is Large ribosomal subunit protein eL31 (RpL31) from Drosophila melanogaster (Fruit fly).